We begin with the raw amino-acid sequence, 408 residues long: Succinylornithine transaminase (408 aa).

Lys-252 is subject to N6-(pyridoxal phosphate)lysine.

The protein belongs to the class-III pyridoxal-phosphate-dependent aminotransferase family. AstC subfamily. It depends on pyridoxal 5'-phosphate as a cofactor.

The enzyme catalyses N(2)-succinyl-L-ornithine + 2-oxoglutarate = N-succinyl-L-glutamate 5-semialdehyde + L-glutamate. The protein operates within amino-acid degradation; L-arginine degradation via AST pathway; L-glutamate and succinate from L-arginine: step 3/5. Its function is as follows. Catalyzes the transamination of N(2)-succinylornithine and alpha-ketoglutarate into N(2)-succinylglutamate semialdehyde and glutamate. Can also act as an acetylornithine aminotransferase. The polypeptide is Succinylornithine transaminase (Salmonella heidelberg (strain SL476)).